The sequence spans 280 residues: Nucleotide-binding protein Dgeo_0723 (280 aa).

8 to 15 (GLSGSGKS) is an ATP binding site. Residue 57–60 (DART) participates in GTP binding.

It belongs to the RapZ-like family.

Displays ATPase and GTPase activities. The chain is Nucleotide-binding protein Dgeo_0723 from Deinococcus geothermalis (strain DSM 11300 / CIP 105573 / AG-3a).